Here is a 259-residue protein sequence, read N- to C-terminus: Global transcriptional regulator CodY (259 aa).

The GAF domain stretch occupies residues 1 to 155 (MELLAKTRKL…SATVVGMEIL (155 aa)). A DNA-binding region (H-T-H motif) is located at residues 203 to 222 (ASKIADRVGITRSVIVNALR). At S215 the chain carries Phosphoserine.

Belongs to the CodY family.

It is found in the cytoplasm. Its function is as follows. DNA-binding global transcriptional regulator which is involved in the adaptive response to starvation and acts by directly or indirectly controlling the expression of numerous genes in response to nutrient availability. During rapid exponential growth, CodY is highly active and represses genes whose products allow adaptation to nutrient depletion. This is Global transcriptional regulator CodY from Bacillus cytotoxicus (strain DSM 22905 / CIP 110041 / 391-98 / NVH 391-98).